Here is a 148-residue protein sequence, read N- to C-terminus: uncharacterized protein (148 aa).

The next 4 membrane-spanning stretches (helical) occupy residues 29-49 (FSLV…AAKE), 61-81 (PIIL…PLVM), 99-119 (FIVF…NGFL), and 121-141 (ILVS…TLCI).

It is found in the cell membrane. This is an uncharacterized protein from Bacillus subtilis (strain 168).